The following is a 256-amino-acid chain: Hemin import ATP-binding protein HmuV (256 aa).

The region spanning 2 to 238 is the ABC transporter domain; that stretch reads ISAQNLVYSL…QALTMLYGAD (237 aa). 34-41 provides a ligand contact to ATP; that stretch reads GPNGAGKS.

This sequence belongs to the ABC transporter superfamily. Heme (hemin) importer (TC 3.A.1.14.5) family. As to quaternary structure, the complex is composed of two ATP-binding proteins (HmuV), two transmembrane proteins (HmuU) and a solute-binding protein (HmuT).

It localises to the cell inner membrane. In terms of biological role, part of the ABC transporter complex HmuTUV involved in hemin import. Responsible for energy coupling to the transport system. This is Hemin import ATP-binding protein HmuV from Shigella dysenteriae serotype 1 (strain Sd197).